The following is a 326-amino-acid chain: Beta-ketoacyl-[acyl-carrier-protein] synthase III (326 aa).

Active-site residues include cysteine 120 and histidine 253. Residues glutamine 254–arginine 258 form an ACP-binding region. The active site involves asparagine 283.

It belongs to the thiolase-like superfamily. FabH family. As to quaternary structure, homodimer.

The protein localises to the cytoplasm. It carries out the reaction malonyl-[ACP] + acetyl-CoA + H(+) = 3-oxobutanoyl-[ACP] + CO2 + CoA. It participates in lipid metabolism; fatty acid biosynthesis. Catalyzes the condensation reaction of fatty acid synthesis by the addition to an acyl acceptor of two carbons from malonyl-ACP. Catalyzes the first condensation reaction which initiates fatty acid synthesis and may therefore play a role in governing the total rate of fatty acid production. Possesses both acetoacetyl-ACP synthase and acetyl transacylase activities. Its substrate specificity determines the biosynthesis of branched-chain and/or straight-chain of fatty acids. The chain is Beta-ketoacyl-[acyl-carrier-protein] synthase III from Cupriavidus necator (strain ATCC 17699 / DSM 428 / KCTC 22496 / NCIMB 10442 / H16 / Stanier 337) (Ralstonia eutropha).